A 215-amino-acid polypeptide reads, in one-letter code: 3-demethoxyubiquinol 3-hydroxylase (215 aa).

The tract at residues 26-47 (PSSAHSQRPSPAVVQPEHKMSE) is disordered. Fe cation-binding residues include glutamate 64, glutamate 94, histidine 97, glutamate 146, glutamate 178, and histidine 181.

The protein belongs to the COQ7 family. Requires Fe cation as cofactor.

It is found in the cell membrane. The catalysed reaction is a 5-methoxy-2-methyl-3-(all-trans-polyprenyl)benzene-1,4-diol + AH2 + O2 = a 3-demethylubiquinol + A + H2O. It functions in the pathway cofactor biosynthesis; ubiquinone biosynthesis. In terms of biological role, catalyzes the hydroxylation of 2-nonaprenyl-3-methyl-6-methoxy-1,4-benzoquinol during ubiquinone biosynthesis. The sequence is that of 3-demethoxyubiquinol 3-hydroxylase from Pseudomonas syringae pv. syringae (strain B728a).